The sequence spans 284 residues: Citrate lyase subunit beta-like protein (284 aa).

Arginine 74 and glutamate 129 together coordinate substrate. Mg(2+)-binding residues include glutamate 129 and aspartate 155.

The protein belongs to the HpcH/HpaI aldolase family. Citrate lyase beta subunit-like subfamily. As to quaternary structure, homotrimer. It depends on Mg(2+) as a cofactor.

In terms of biological role, may play a role in fatty acid biosynthesis. This is Citrate lyase subunit beta-like protein from Deinococcus radiodurans (strain ATCC 13939 / DSM 20539 / JCM 16871 / CCUG 27074 / LMG 4051 / NBRC 15346 / NCIMB 9279 / VKM B-1422 / R1).